A 429-amino-acid chain; its full sequence is ATP-sensitive inward rectifier potassium channel 12 (429 aa).

Residues 1–76 are Cytoplasmic-facing; the sequence is MTAGRVNPYS…IADMFTTCVD (76 aa). The helical transmembrane segment at 77 to 103 threads the bilayer; that stretch reads IRWRYMLLLFSLAFLVSWLLFGLIFWL. Arginine 78 and arginine 80 together coordinate a 1,2-diacyl-sn-glycero-3-phospho-(1D-myo-inositol-4,5-bisphosphate). Over 104–129 the chain is Extracellular; that stretch reads IALIHGDLENPGGDDTFKPCVLQVNG. Cysteines 123 and 155 form a disulfide. An intramembrane region (helical; Pore-forming) is located at residues 130-146; it reads FVAAFLFSIETQTTIGY. K(+) contacts are provided by threonine 143, isoleucine 144, glycine 145, and tyrosine 146. The short motif at 143 to 148 is the Selectivity filter element; that stretch reads TIGYGF. The Extracellular portion of the chain corresponds to 147–155; it reads GFRCVTEEC. The helical transmembrane segment at 156-183 threads the bilayer; that stretch reads PLAVFMVVVQSIVGCIIDSFMIGAIMAK. Lysine 183 and lysine 188 together coordinate a 1,2-diacyl-sn-glycero-3-phospho-(1D-myo-inositol-4,5-bisphosphate). The Cytoplasmic segment spans residues 184 to 429; sequence MARPKKRAQT…QRSYRRESEI (246 aa). The tract at residues 386 to 407 is disordered; sequence RDEDEEDDDSRGLDDLSPDNRH. A compositionally biased stretch (basic and acidic residues) spans 395 to 407; that stretch reads SRGLDDLSPDNRH.

This sequence belongs to the inward rectifier-type potassium channel family. As to quaternary structure, homotetramer.

Its subcellular location is the membrane. The protein localises to the cell membrane. It localises to the sarcolemma. The protein resides in the T-tubule. It catalyses the reaction K(+)(in) = K(+)(out). With respect to regulation, activated by phosphatidylinositol 4,5-bisphosphate (PtdIns(4,5)P2). PtdIns(4,5)P2 binding to the cytoplasmic side of the channel triggers a conformation change leading to channel opening. In terms of biological role, inward rectifying potassium channel that probably participates in controlling the resting membrane potential in electrically excitable cells. Probably participates in establishing action potential waveform and excitability of neuronal and muscle tissues. Inward rectifier potassium channels are characterized by a greater tendency to allow potassium to flow into the cell rather than out of it. Their voltage dependence is regulated by the concentration of extracellular potassium; as external potassium is raised, the voltage range of the channel opening shifts to more positive voltages. The inward rectification is mainly due to the blockage of outward current by internal magnesium. This chain is ATP-sensitive inward rectifier potassium channel 12 (KCNJ12), found in Gallus gallus (Chicken).